Consider the following 634-residue polypeptide: MTVETDKQTLGFQTEVKQLLQLMIHSLYSNKEIFLRELVSNAADAADKLRFEALVKPELLEGSGELRIRVDYDKDARTVTIDDNGIGMSREDAVSHLGTIAKSGTADFLKHLSGDQKKDANLIGQFGVGFYSAFIVADQVDVYSRRAGLPASEGVHWSSRGEGEFEIASVDKPERGTRIVLHLKEGEESFADGWTLRGILKKYSDHIGLPIEMRKEHYGEAADKPAEPEWEAVNRASALWTRPKSEIKDEEYQEFYKHVAHDAGNPLAWSHNKVEGKLEYTSLLFVPGRAPFDLYHRDSAKGLKLYVQRVFIMDQAEQFLPLYLRFIKGVVDSSDLSLNVSREILQSGPVVDSMKSALTKRSLDMLEKLAKDKPDDYATFWRNFGQALKEGPAEDYANREKIAGLLRFSSTHDTTGAQSVGLADYVGRLADGQDKLYYLTGESYAQIKDSPHLEVFRKKGIEVLLLTDRIDEWLMSYLTEFDGKSFVDVARGDLDLGKLDSEEDKKAQEEVAKSKEGLASRIKAALGDDVAELRVSHRLTDSPAILAIGQGDLGLQMRQLLEASGQAVPESKPVFEFNPTHPLIEKLDAEQDMDRFGDLSRVLFDQAALAAGDSLKDPAAYVRRLNKLLLELSA.

Positions M1–R342 are a; substrate-binding. The interval E343 to Q559 is b. A c region spans residues L560–A634.

Belongs to the heat shock protein 90 family. Homodimer.

It is found in the cytoplasm. Functionally, molecular chaperone. Has ATPase activity. The polypeptide is Chaperone protein HtpG (Xanthomonas axonopodis pv. citri (strain 306)).